The primary structure comprises 277 residues: Large ribosomal subunit protein uL2 (277 aa).

Residues 222-277 (GVAMNPVDHPHGGGEGRTSGGRHPVSPWGKSTKGKRTRSNKATDKFIMHTRHQRKK) are disordered.

Belongs to the universal ribosomal protein uL2 family. As to quaternary structure, part of the 50S ribosomal subunit. Forms a bridge to the 30S subunit in the 70S ribosome.

In terms of biological role, one of the primary rRNA binding proteins. Required for association of the 30S and 50S subunits to form the 70S ribosome, for tRNA binding and peptide bond formation. It has been suggested to have peptidyltransferase activity; this is somewhat controversial. Makes several contacts with the 16S rRNA in the 70S ribosome. The polypeptide is Large ribosomal subunit protein uL2 (Bartonella quintana (strain Toulouse) (Rochalimaea quintana)).